The sequence spans 383 residues: Protein FAM217B (383 aa).

Disordered stretches follow at residues M1–A70, A89–L115, K200–G222, S232–A251, Q284–V325, and S338–K383. Positions N8–P43 are enriched in polar residues. Positions T44–A56 are enriched in basic and acidic residues. Residues G374–K383 are compositionally biased toward polar residues.

The protein belongs to the FAM217 family.

The chain is Protein FAM217B (FAM217B) from Homo sapiens (Human).